We begin with the raw amino-acid sequence, 490 residues long: Dual specificity protein kinase CLK3 (490 aa).

The residue at position 7 (Y7) is a Phosphotyrosine. A phosphoserine mark is found at S9, S49, S51, S67, S76, and S78. Positions 22 to 138 (RRRSYSREHE…SKRSSRSVED (117 aa)) are disordered. Basic and acidic residues-rich tracts occupy residues 26 to 56 (YSRE…DRLP) and 63 to 76 (EHRD…EDRS). Positions 103-116 (TRKHAHHCHKRRTR) are enriched in basic residues. Residues 117-130 (SCSSASSRSQQSSK) show a composition bias toward low complexity. S135 bears the Phosphoserine mark. The Protein kinase domain occupies 156-472 (YEIVGNLGEG…LAEALLHPFF (317 aa)). ATP-binding positions include 162–170 (LGEGTFGKV) and K186. Residue D283 is the Proton acceptor of the active site.

The protein belongs to the protein kinase superfamily. CMGC Ser/Thr protein kinase family. Lammer subfamily. Post-translationally, autophosphorylates on all three types of residues.

Its subcellular location is the nucleus. It localises to the cytoplasm. It is found in the cytoplasmic vesicle. The protein resides in the secretory vesicle. The protein localises to the acrosome. The catalysed reaction is L-seryl-[protein] + ATP = O-phospho-L-seryl-[protein] + ADP + H(+). It catalyses the reaction L-threonyl-[protein] + ATP = O-phospho-L-threonyl-[protein] + ADP + H(+). It carries out the reaction L-tyrosyl-[protein] + ATP = O-phospho-L-tyrosyl-[protein] + ADP + H(+). Its activity is regulated as follows. Leucettine L41 inhibits its kinase activity and affects the regulation of alternative splicing mediated by phosphorylation of SR proteins. In terms of biological role, dual specificity kinase acting on both serine/threonine and tyrosine-containing substrates. Phosphorylates serine- and arginine-rich (SR) proteins of the spliceosomal complex. May be a constituent of a network of regulatory mechanisms that enable SR proteins to control RNA splicing and can cause redistribution of SR proteins from speckles to a diffuse nucleoplasmic distribution. Phosphorylates SRSF1 and SRSF3. Regulates the alternative splicing of tissue factor (F3) pre-mRNA in endothelial cells. This is Dual specificity protein kinase CLK3 (CLK3) from Bos taurus (Bovine).